The sequence spans 270 residues: MQIPFLHKRKRGKKPSAAAAAARAVDKARYDGTLIARGLTKSYRSRRVVNGVSLVVRRGEAVGLLGPNGAGKTTCFYMITGLVPVDEGSIEINGNDVTTMPMYRRARLGVGYLPQEASIFRGLTVEDNIRAVLEVHDENVDRRESKLNDLLGEFSITHLRKSPAIALSGGERRRLEIARALATDPTFMLLDEPFAGVDPISVADIQALVRHLTSRGIGVLITDHNVRETLGLIDRAYIIHAGEVLTHGRANDIVTNPDVRRLYLGDNFSL.

Residues 34-266 (LIARGLTKSY…PDVRRLYLGD (233 aa)) enclose the ABC transporter domain. ATP is bound at residue 66–73 (GPNGAGKT).

The protein belongs to the ABC transporter superfamily.

This is an uncharacterized protein from Rhizobium meliloti (strain 1021) (Ensifer meliloti).